A 748-amino-acid polypeptide reads, in one-letter code: Disintegrin and metalloproteinase domain-containing protein 10 (748 aa).

Residues 1–19 (MVLLRVLILLLSWVAGLGG) form the signal peptide. The propeptide occupies 20-213 (QYGNPLNKYI…NGPELLRKKR (194 aa)). Residues 20-672 (QYGNPLNKYI…SPELYENIAE (653 aa)) are Extracellular-facing. Residues 171 to 178 (GGCADHSV) carry the Cysteine switch motif. Cys173 lines the Zn(2+) pocket. The region spanning 220-456 (NTCQLYIQTD…KRNNCFVESG (237 aa)) is the Peptidase M12B domain. Residues Asn267 and Asn278 are each glycosylated (N-linked (GlcNAc...) asparagine). Disulfide bonds link Cys344–Cys451, Cys399–Cys435, Cys460–Cys495, Cys471–Cys484, Cys473–Cys479, Cys483–Cys515, Cys503–Cys511, Cys510–Cys536, Cys524–Cys543, Cys530–Cys562, Cys555–Cys567, Cys572–Cys598, Cys580–Cys607, Cys582–Cys597, Cys594–Cys639, and Cys632–Cys645. Residue His383 coordinates Zn(2+). Glu384 is a catalytic residue. Residues His387 and His393 each contribute to the Zn(2+) site. N-linked (GlcNAc...) asparagine glycosylation is present at Asn439. The region spanning 457–551 (QPICGNGMVE…LCPASDPKPN (95 aa)) is the Disintegrin domain. Asn551 is a glycosylation site (N-linked (GlcNAc...) asparagine). A helical membrane pass occupies residues 673 to 696 (WIVAYWWAVLLMGIALIMLMAGFI). Residues 697–748 (KICSVHTPSSNPKLPPPKPLPGTLKRRRPPQPIQQPQRQRPRESYQMGHMRR) lie on the Cytoplasmic side of the membrane. The segment at 704–748 (PSSNPKLPPPKPLPGTLKRRRPPQPIQQPQRQRPRESYQMGHMRR) is disordered. Residues 708–715 (PKLPPPKP) carry the SH3-binding motif. At Thr719 the chain carries Phosphothreonine. An SH3-binding motif is present at residues 722–728 (RRRPPQP). Residues 734–748 (RQRPRESYQMGHMRR) form an interaction with AP2A1, AP2A2 and AP2M1 region.

In terms of assembly, forms a ternary EFNA5-EPHA3-ADAM10 complex mediating EFNA5 extracellular domain shedding by ADAM10 which regulates the EFNA5-EPHA3 complex internalization and function, the cleavage occurs in trans, with ADAM10 and its substrate being on the membranes of opposing cells. Interacts with the clathrin adapter AP2 complex subunits AP2A1, AP2A2, AP2B1, and AP2M1; this interaction facilitates ADAM10 endocytosis from the plasma membrane during long-term potentiation in hippocampal neurons. Forms a ternary complex composed of ADAM10, EPHA4 and CADH1; within the complex, ADAM10 cleaves CADH1 which disrupts adherens junctions. Interacts with EPHA2. Interacts with NGF in a divalent cation-dependent manner. Interacts with TSPAN14; the interaction promotes ADAM10 maturation and cell surface expression. Interacts with TSPAN5, TSPAN10, TSPAN14, TSPAN15, TSPAN17 and TSPAN33; these interactions regulate ADAM10 substrate specificity, endocytosis and turnover. Interacts (via extracellular domain) with TSPAN33 (via extracellular domain) and (via cytoplasmic domain) with AFDN; interaction with TSPAN33 allows the docking of ADAM10 to zonula adherens through a PDZ11-dependent interaction between TSPAN33 and PLEKHA7 while interaction with AFDN locks ADAM10 at zonula adherens. Interacts with DLG1; this interaction recruits ADAM10 to the cell membrane during long-term depression in hippocampal neurons. Interacts (via extracellular domain) with BACE1 (via extracellular domain). Interacts with FAM171A1. Requires Zn(2+) as cofactor. The precursor is cleaved by furin and PCSK7. Expressed at low level in kidney, spleen, lung, adrenal, heart and peripheral nerve.

It localises to the golgi apparatus membrane. The protein localises to the cell membrane. It is found in the cytoplasmic vesicle. Its subcellular location is the clathrin-coated vesicle. The protein resides in the cell projection. It localises to the axon. The protein localises to the dendrite. It is found in the cell junction. Its subcellular location is the adherens junction. The protein resides in the cytoplasm. The enzyme catalyses Endopeptidase of broad specificity.. Its activity is regulated as follows. Catalytically inactive when the propeptide is intact and associated with the mature enzyme. The disintegrin and cysteine-rich regions modulate access of substrates to exerts an inhibitory effect on the cleavage of ADAM10 substrates. Functionally, transmembrane metalloprotease which mediates the ectodomain shedding of a myriad of transmembrane proteins, including adhesion proteins, growth factor precursors and cytokines being essential for development and tissue homeostasis. Associates with six members of the tetraspanin superfamily TspanC8 which regulate its exit from the endoplasmic reticulum and its substrate selectivity. Cleaves the membrane-bound precursor of TNF-alpha at '76-Ala-|-Val-77' to its mature soluble form. Responsible for the proteolytical release of soluble JAM3 from endothelial cells surface. Responsible for the proteolytic release of several other cell-surface proteins, including heparin-binding epidermal growth-like factor, ephrin-A2, CD44, CDH2 and for constitutive and regulated alpha-secretase cleavage of amyloid precursor protein (APP). Contributes to the normal cleavage of the cellular prion protein. Involved in the cleavage of the adhesion molecule L1 at the cell surface and in released membrane vesicles, suggesting a vesicle-based protease activity. Also controls the proteolytic processing of Notch and mediates lateral inhibition during neurogenesis. Required for the development of type 1 transitional B cells into marginal zone B cells, probably by cleaving Notch. Responsible for the FasL ectodomain shedding and for the generation of the remnant ADAM10-processed FasL (FasL APL) transmembrane form. Also cleaves the ectodomain of the integral membrane proteins CORIN and ITM2B. Mediates the proteolytic cleavage of LAG3, leading to release the secreted form of LAG3. Mediates the proteolytic cleavage of IL6R and IL11RA, leading to the release of secreted forms of IL6R and IL11RA. Enhances the cleavage of CHL1 by BACE1. Cleaves NRCAM. Cleaves TREM2, resulting in shedding of the TREM2 ectodomain. Involved in the development and maturation of glomerular and coronary vasculature. During development of the cochlear organ of Corti, promotes pillar cell separation by forming a ternary complex with CADH1 and EPHA4 and cleaving CADH1 at adherens junctions. May regulate the EFNA5-EPHA3 signaling. Regulates leukocyte transmigration as a sheddase for the adherens junction protein VE-cadherin/CDH5 in endothelial cells. This is Disintegrin and metalloproteinase domain-containing protein 10 (ADAM10) from Bos taurus (Bovine).